A 316-amino-acid chain; its full sequence is Porphobilinogen deaminase (316 aa).

An S-(dipyrrolylmethanemethyl)cysteine modification is found at cysteine 240.

The protein belongs to the HMBS family. Monomer. It depends on dipyrromethane as a cofactor.

It catalyses the reaction 4 porphobilinogen + H2O = hydroxymethylbilane + 4 NH4(+). It functions in the pathway porphyrin-containing compound metabolism; protoporphyrin-IX biosynthesis; coproporphyrinogen-III from 5-aminolevulinate: step 2/4. Tetrapolymerization of the monopyrrole PBG into the hydroxymethylbilane pre-uroporphyrinogen in several discrete steps. This is Porphobilinogen deaminase from Alkaliphilus metalliredigens (strain QYMF).